Consider the following 99-residue polypeptide: Acylphosphatase-1 (99 aa).

One can recognise an Acylphosphatase-like domain in the interval 9–99; that stretch reads SVDYEVFGKV…LEHSTFSICK (91 aa). Catalysis depends on residues Arg-24 and Asn-42.

Belongs to the acylphosphatase family.

The catalysed reaction is an acyl phosphate + H2O = a carboxylate + phosphate + H(+). The chain is Acylphosphatase-1 (acyp1) from Xenopus laevis (African clawed frog).